The sequence spans 420 residues: O-methyltransferase penK (420 aa).

Residue D285 coordinates S-adenosyl-L-methionine. H325 acts as the Proton acceptor in catalysis.

This sequence belongs to the class I-like SAM-binding methyltransferase superfamily. Cation-independent O-methyltransferase family.

The protein operates within secondary metabolite biosynthesis. It participates in alkaloid biosynthesis. It functions in the pathway mycotoxin biosynthesis. In terms of biological role, O-methyltransferase; part of the gene cluster that mediates the biosynthesis of penigequinolones, potent insecticidal alkaloids that contain a highly modified 10-carbon prenyl group. The first stage is catalyzed by the nonribosomal peptide synthetase penN that condenses anthranilic acid and O-methyl-L-tyrosine to produce 4'-methoxycyclopeptin. 4'-methoxycyclopeptin is then converted to 4'-methoxydehydrocyclopeptin by the ketoglutarate-dependent dioxygenase penM through dehydrogenation to form a double bond between C-alpha and C-beta of the O-methyltyrosine side chain. PenM also converts its first product methoxydehydrocyclopeptin to 4'-methoxycyclopenin. The following conversion of 4'methoxycyclopenin into 4'-methoxyviridicatin is catalyzed by the cyclopenase penL. 4'-methoxyviridicatin is the precursor of quinolone natural products, and is further converted to quinolinone B. The prenyltransferase penI then catalyzes the canonical Friedel-Crafts alkylation of quinolinone B with dimethylallyl cation to yield dimethylallyl quinolone, which is subjected to FAD-dependent dehydrogenation by the FAD-linked oxidoreductase penH to yield conjugated aryl diene. The delta(3') double bond then serves as the site of the second alkylation with DMAPP catalyzed by the prenyltransferase penG to yield a carbenium ion intermediate, which can be attacked by H(2)O to yield a styrenyl quinolone containing a C3'-hydroxyprenyl chain, or undergo cyclization to yield yaequinolones J1 and J2. The conversion of the styrenyl quinolone into the tetrahydrofuran-containing yaequinolone C is performed by the FAD-dependent monooxygenase penE and involves epoxidation of the terminal C7'-C8' olefin, followed by epoxide ring opening initiated by the C3' hydroxyl group. The predicted cysteine hydrolase penJ acts as an epoxide hydrolase that enhances the rate of the 5-exo-tet cyclization step, increasing the yield of yaequinolone C. PenF catalyzes the cationic rearrangement of the epoxide formed by penE (before ring opening to produce yaequinolone C) into yaequinolone D. Finally, the short-chain dehydrogenase/reductase (SDR)-like reductase penD, catalyzes both the dehydration of yaequinolone D and the reduction of the resulting oxonium to yield penigequinolone. The sequence is that of O-methyltransferase penK from Penicillium thymicola.